Consider the following 293-residue polypeptide: CDP-abequose synthase (293 aa).

Substrate is bound at residue threonine 113. Tyrosine 130 functions as the Proton acceptor in the catalytic mechanism.

Belongs to the NAD(P)-dependent epimerase/dehydratase family.

It catalyses the reaction CDP-alpha-D-abequose + NADP(+) = CDP-4-dehydro-3,6-dideoxy-alpha-D-glucose + NADPH + H(+). It functions in the pathway bacterial outer membrane biogenesis; LPS O-antigen biosynthesis. This is CDP-abequose synthase from Salmonella muenchen.